A 146-amino-acid polypeptide reads, in one-letter code: Hemoglobin subunit beta (146 aa).

N-acetylvaline is present on Val1. The Globin domain occupies 2–146; the sequence is HLTPEEKVAV…VANALAHKYH (145 aa). A Phosphothreonine modification is found at Thr12. Ser44 bears the Phosphoserine mark. Lys59 is modified (N6-acetyllysine). Heme b is bound at residue His63. Lys82 is subject to N6-acetyllysine. His92 is a heme b binding site. The residue at position 93 (Cys93) is an S-nitrosocysteine. Lys144 bears the N6-acetyllysine mark.

It belongs to the globin family. As to quaternary structure, heterotetramer of two alpha chains and two beta chains. As to expression, red blood cells.

In terms of biological role, involved in oxygen transport from the lung to the various peripheral tissues. The sequence is that of Hemoglobin subunit beta (HBB) from Cercocebus atys (Sooty mangabey).